The chain runs to 37 residues: Hemextin B (37 aa).

Heterotetramer composed of 2 hemextin A and 2 hemextin B chains; non-covalently linked. Does not exist as a complex in the crude venom. May contain several disulfide bonds. As to expression, expressed by the venom gland.

It localises to the secreted. In terms of biological role, hemextin B (monomer): does not show anticoagulant activity. Seems only to synergitically enhance hemextin A activity. Functionally, hemextin AB complex: specifically inhibits the activation of FX (F10) by the TF-FVIIa complex (extrinsic tenase complex (ETC)) (IC(50)= 100 nM, Ki=50 nM) by non-competitively inhibiting the enzymatic activity of FVIIa. This is Hemextin B from Hemachatus haemachatus (Rinkhals).